A 227-amino-acid chain; its full sequence is UPF0173 metal-dependent hydrolase Bcer98_3294 (227 aa).

It belongs to the UPF0173 family.

This is UPF0173 metal-dependent hydrolase Bcer98_3294 from Bacillus cytotoxicus (strain DSM 22905 / CIP 110041 / 391-98 / NVH 391-98).